A 510-amino-acid chain; its full sequence is NAD(P)H-quinone oxidoreductase subunit 2 A, chloroplastic (510 aa).

13 helical membrane passes run 24–44 (LLLFDGSLIFPECILIFGLIL), 57–77 (IPWLYFISSTSLVMSITALLF), 99–119 (IFQFLILLCSTLCIPLSVEYI), 124–144 (MAITEFLLFVLTATLGGMFLC), 149–169 (LITIFVAPECFSLCSYLLSGY), 183–203 (YLLMGGASSSILVHGFSWLYG), 227–247 (PGISIALIFITVGIGFKLSPA), 295–315 (WHLLLEILAILSMILGNLIAI), 323–343 (MLAYSSIGQIGYVIIGIIVGD), 354–374 (YMLFYISMNLGTFACIVLFGL), 395–415 (ALSLALCLLSLGGLPPLAGFF), 418–438 (LYLFWCGWQAGLYFLVLIGLL), and 484–504 (MIVCVIASTIPGISMNPIIAI).

Belongs to the complex I subunit 2 family. In terms of assembly, NDH is composed of at least 16 different subunits, 5 of which are encoded in the nucleus.

Its subcellular location is the plastid. The protein localises to the chloroplast thylakoid membrane. The catalysed reaction is a plastoquinone + NADH + (n+1) H(+)(in) = a plastoquinol + NAD(+) + n H(+)(out). It catalyses the reaction a plastoquinone + NADPH + (n+1) H(+)(in) = a plastoquinol + NADP(+) + n H(+)(out). NDH shuttles electrons from NAD(P)H:plastoquinone, via FMN and iron-sulfur (Fe-S) centers, to quinones in the photosynthetic chain and possibly in a chloroplast respiratory chain. The immediate electron acceptor for the enzyme in this species is believed to be plastoquinone. Couples the redox reaction to proton translocation, and thus conserves the redox energy in a proton gradient. This is NAD(P)H-quinone oxidoreductase subunit 2 A, chloroplastic from Solanum lycopersicum (Tomato).